Here is a 547-residue protein sequence, read N- to C-terminus: Probable bifunctional tRNA threonylcarbamoyladenosine biosynthesis protein (547 aa).

The tract at residues 1 to 329 (MKKTFILGIE…FRTDDVKVTW (329 aa)) is kae1. Fe cation is bound by residues His-113, His-117, and Tyr-134. L-threonylcarbamoyladenylate-binding positions include 134 to 138 (YVSGA), Asp-166, Gly-179, Glu-183, and Asn-262. Fe cation is bound at residue Asp-290. Residues 340–547 (EISPETFFRM…EEIKKRARYA (208 aa)) form the Protein kinase domain. ATP-binding positions include 355–363 (LDNGAEAVV) and Lys-377. Asp-464 functions as the Proton acceptor; for kinase activity in the catalytic mechanism.

It in the N-terminal section; belongs to the KAE1 / TsaD family. In the C-terminal section; belongs to the protein kinase superfamily. Tyr protein kinase family. BUD32 subfamily. Component of the KEOPS complex that consists of Kae1, Bud32, Cgi121 and Pcc1; the whole complex dimerizes. It depends on Fe(2+) as a cofactor.

Its subcellular location is the cytoplasm. The catalysed reaction is L-seryl-[protein] + ATP = O-phospho-L-seryl-[protein] + ADP + H(+). It carries out the reaction L-threonyl-[protein] + ATP = O-phospho-L-threonyl-[protein] + ADP + H(+). It catalyses the reaction L-threonylcarbamoyladenylate + adenosine(37) in tRNA = N(6)-L-threonylcarbamoyladenosine(37) in tRNA + AMP + H(+). Its function is as follows. Required for the formation of a threonylcarbamoyl group on adenosine at position 37 (t(6)A37) in tRNAs that read codons beginning with adenine. Is a component of the KEOPS complex that is probably involved in the transfer of the threonylcarbamoyl moiety of threonylcarbamoyl-AMP (TC-AMP) to the N6 group of A37. The Kae1 domain likely plays a direct catalytic role in this reaction. The Bud32 domain probably displays kinase activity that regulates Kae1 function. This chain is Probable bifunctional tRNA threonylcarbamoyladenosine biosynthesis protein, found in Methanosarcina mazei (strain ATCC BAA-159 / DSM 3647 / Goe1 / Go1 / JCM 11833 / OCM 88) (Methanosarcina frisia).